A 1407-amino-acid polypeptide reads, in one-letter code: DNA-directed RNA polymerase subunit beta' (1407 aa).

Zn(2+) is bound by residues Cys-70, Cys-72, Cys-85, and Cys-88. The Mg(2+) site is built by Asp-460, Asp-462, and Asp-464. Positions 814, 888, 895, and 898 each coordinate Zn(2+). Residue Lys-972 is modified to N6-acetyllysine.

It belongs to the RNA polymerase beta' chain family. As to quaternary structure, the RNAP catalytic core consists of 2 alpha, 1 beta, 1 beta' and 1 omega subunit. When a sigma factor is associated with the core the holoenzyme is formed, which can initiate transcription. The cofactor is Mg(2+). It depends on Zn(2+) as a cofactor.

The catalysed reaction is RNA(n) + a ribonucleoside 5'-triphosphate = RNA(n+1) + diphosphate. DNA-dependent RNA polymerase catalyzes the transcription of DNA into RNA using the four ribonucleoside triphosphates as substrates. In Escherichia coli (strain SMS-3-5 / SECEC), this protein is DNA-directed RNA polymerase subunit beta'.